Consider the following 132-residue polypeptide: Small ribosomal subunit protein uS8 (132 aa).

It belongs to the universal ribosomal protein uS8 family. Part of the 30S ribosomal subunit. Contacts proteins S5 and S12.

In terms of biological role, one of the primary rRNA binding proteins, it binds directly to 16S rRNA central domain where it helps coordinate assembly of the platform of the 30S subunit. The sequence is that of Small ribosomal subunit protein uS8 from Heliobacterium modesticaldum (strain ATCC 51547 / Ice1).